A 147-amino-acid chain; its full sequence is Putative pre-16S rRNA nuclease (147 aa).

The protein belongs to the YqgF nuclease family.

The protein resides in the cytoplasm. Functionally, could be a nuclease involved in processing of the 5'-end of pre-16S rRNA. The polypeptide is Putative pre-16S rRNA nuclease (Polynucleobacter necessarius subsp. necessarius (strain STIR1)).